Reading from the N-terminus, the 160-residue chain is Cytochrome b6-f complex subunit 4 (160 aa).

3 helical membrane-spanning segments follow: residues L36–V56, L95–E115, and T131–I151.

This sequence belongs to the cytochrome b family. PetD subfamily. In terms of assembly, the 4 large subunits of the cytochrome b6-f complex are cytochrome b6, subunit IV (17 kDa polypeptide, petD), cytochrome f and the Rieske protein, while the 4 small subunits are petG, petL, petM and petN. The complex functions as a dimer.

The protein resides in the plastid. It is found in the chloroplast thylakoid membrane. Functionally, component of the cytochrome b6-f complex, which mediates electron transfer between photosystem II (PSII) and photosystem I (PSI), cyclic electron flow around PSI, and state transitions. This is Cytochrome b6-f complex subunit 4 from Chlorella vulgaris (Green alga).